The primary structure comprises 87 residues: Small ribosomal subunit protein bS20 (87 aa).

The protein belongs to the bacterial ribosomal protein bS20 family.

Functionally, binds directly to 16S ribosomal RNA. The sequence is that of Small ribosomal subunit protein bS20 from Clostridium perfringens (strain 13 / Type A).